Reading from the N-terminus, the 416-residue chain is Neurotensin receptor type 2 (416 aa).

Residues 1-32 lie on the Extracellular side of the membrane; sequence METSSLWPPRPSPSAGLSLEARLGVDTRLWAK. The helical transmembrane segment at 33–55 threads the bilayer; sequence VLFTALYSLIFALGTAGNALSVH. The Cytoplasmic portion of the chain corresponds to 56-64; it reads VVLKARAGR. A helical membrane pass occupies residues 65 to 87; the sequence is PGRLRYHVLSLALSALLLLLISV. The Extracellular portion of the chain corresponds to 88 to 109; it reads PMELYNFVWSHYPWVFGDLGCR. An intrachain disulfide couples Cys-108 to Cys-194. A helical transmembrane segment spans residues 110 to 131; it reads GYYFVRELCAYATVLSVASLSA. The Cytoplasmic segment spans residues 132-154; it reads ERCLAVCQPLRARRLLTPRRTRR. The helical transmembrane segment at 155–176 threads the bilayer; that stretch reads LLSLVWVASLGLALPMAVIMGQ. Residues 177 to 217 are Extracellular-facing; it reads KHEMERADGEPEPASRVCTVLVSRATLQVFIQVNVLVSFVL. A helical membrane pass occupies residues 218–237; sequence PLALTAFLNGITVNHLVALY. Residues 238–297 lie on the Cytoplasmic side of the membrane; sequence SQVPSASAQVNSIPSRLELLSEEGLLGFITWRKTLSLGVQASLVRHKDASQIRSLQHSAQ. Residues 298–318 traverse the membrane as a helical segment; sequence VLRAIVAVYVICWLPYHARRL. The Extracellular segment spans residues 319 to 337; the sequence is MYCYIPDDGWTDELYDFYH. The helical transmembrane segment at 338 to 358 threads the bilayer; the sequence is YFYMVTNTLFYVSSAVTPVLY. At 359–416 the chain is on the cytoplasmic side; the sequence is NAVSSSFRKLFLESLSSLCGEQRSVVPLPQEAPESTTSTYSFRLWGSPRNPSLGEIQV. A lipid anchor (S-palmitoyl cysteine) is attached at Cys-377. Residue Ser-410 is modified to Phosphoserine.

The protein belongs to the G-protein coupled receptor 1 family. Neurotensin receptor subfamily. NTSR2 sub-subfamily. Expressed maximally in the cerebellum, hippocampus, piriform cortex and neocortex of adult brain.

It localises to the cell membrane. Functionally, receptor for the tridecapeptide neurotensin. It is associated with G proteins that activate a phosphatidylinositol-calcium second messenger system. The protein is Neurotensin receptor type 2 (Ntsr2) of Mus musculus (Mouse).